The chain runs to 549 residues: MSMFCFQCQETAGCKGCTVRGVCGKTEDVAKIQDLLIFVTKGLATVANEGRKVGIVDKKVNRMIIDNLFITITNANFDFKAIEKRVKDTLVAREELKERVQAKGGNPIGSDFKGCATWTATTSEEMMEKASQVGVLATENEDIRSLRELIMYGLKGLAAYMEHAMNLGHDKEEVHAFMAETLVKILDDSLSADELTALALETGKFGVDGMALLDEANTSTYGHPEITKVNIGVRNNPGILISGHDLKDLEMLLEQTEGTGVDVYTHGEMLPGHYYPKFKKYAHFAGNYGNAWWLQNKEFASFNGPILMTTNCITPVQDSYRGRIFTTGAVGYEGCIHITADENGYKDFSQIIELAKTCKAPTEIETGEIVGGFAHNQVLALADQVVDAVKSGAIRRFFVMAGCDGRAKSRDYYREFAEKLPKDTVILTAGCAKYKYNKLPLGDINGIPRVLDAGQCNDSYSLVVIALKLAEVFGTDSVNELPISYNIAWYEQKAVIVLLSLLHLGVKNIHLGPTLPAFLSPNVAKVLVENFGIGGITNVEDDMKMFLGE.

[4Fe-4S] cluster-binding residues include cysteine 5, cysteine 8, cysteine 17, and cysteine 23. Residues histidine 244, glutamate 268, cysteine 312, cysteine 403, cysteine 431, cysteine 456, glutamate 491, and lysine 493 each contribute to the hybrid [4Fe-2O-2S] cluster site. Cysteine 403 is subject to Cysteine persulfide.

The protein belongs to the HCP family. [4Fe-4S] cluster serves as cofactor. Hybrid [4Fe-2O-2S] cluster is required as a cofactor.

It localises to the cytoplasm. The enzyme catalyses A + NH4(+) + H2O = hydroxylamine + AH2 + H(+). In terms of biological role, catalyzes the reduction of hydroxylamine to form NH(3) and H(2)O. This Clostridium perfringens (strain 13 / Type A) protein is Hydroxylamine reductase.